The sequence spans 272 residues: Hydroxyethylthiazole kinase (272 aa).

M62 is a substrate binding site. Residues R138 and T183 each coordinate ATP. G210 contributes to the substrate binding site.

Belongs to the Thz kinase family. It depends on Mg(2+) as a cofactor.

The catalysed reaction is 5-(2-hydroxyethyl)-4-methylthiazole + ATP = 4-methyl-5-(2-phosphooxyethyl)-thiazole + ADP + H(+). Its pathway is cofactor biosynthesis; thiamine diphosphate biosynthesis; 4-methyl-5-(2-phosphoethyl)-thiazole from 5-(2-hydroxyethyl)-4-methylthiazole: step 1/1. Catalyzes the phosphorylation of the hydroxyl group of 4-methyl-5-beta-hydroxyethylthiazole (THZ). The sequence is that of Hydroxyethylthiazole kinase from Dichelobacter nodosus (strain VCS1703A).